A 152-amino-acid chain; its full sequence is Ribosome maturation factor RimP (152 aa).

This sequence belongs to the RimP family.

The protein localises to the cytoplasm. In terms of biological role, required for maturation of 30S ribosomal subunits. The protein is Ribosome maturation factor RimP of Rubrobacter xylanophilus (strain DSM 9941 / JCM 11954 / NBRC 16129 / PRD-1).